The sequence spans 305 residues: MLKQRTIKSIVKTVGIGVHSGRKIELTLRPAAPGTGIVFSRVDLPTPVDIPASAMSIGDTRLASVLQKDGVRVSTVEHLMSACAGLGIDNLYVDVTAEEIPIMDGSAATFVFLIQSAGIEEQNAPKRFIKVKKPVEIRDGDKFARLDPYFGFKLKFSIDFRHPAVDKTGQELEVDFATTSYVREIARARTFGFAHEAEMLREIGLARGGSMDNAIVLDEYRILNNDGLRYDDEFVKHKMLDAIGDLYVIGHPLLASYTAYKSGHGLNNALLRELLAHEDAYEIVTFDDPQAAPKGFAFDAQTAFA.

Histidine 78, histidine 237, and aspartate 241 together coordinate Zn(2+). The Proton donor role is filled by histidine 264.

Belongs to the LpxC family. It depends on Zn(2+) as a cofactor.

It catalyses the reaction a UDP-3-O-[(3R)-3-hydroxyacyl]-N-acetyl-alpha-D-glucosamine + H2O = a UDP-3-O-[(3R)-3-hydroxyacyl]-alpha-D-glucosamine + acetate. Its pathway is glycolipid biosynthesis; lipid IV(A) biosynthesis; lipid IV(A) from (3R)-3-hydroxytetradecanoyl-[acyl-carrier-protein] and UDP-N-acetyl-alpha-D-glucosamine: step 2/6. Functionally, catalyzes the hydrolysis of UDP-3-O-myristoyl-N-acetylglucosamine to form UDP-3-O-myristoylglucosamine and acetate, the committed step in lipid A biosynthesis. The sequence is that of UDP-3-O-acyl-N-acetylglucosamine deacetylase from Burkholderia cenocepacia (strain ATCC BAA-245 / DSM 16553 / LMG 16656 / NCTC 13227 / J2315 / CF5610) (Burkholderia cepacia (strain J2315)).